The chain runs to 320 residues: Porphobilinogen deaminase (320 aa).

Cysteine 248 carries the post-translational modification S-(dipyrrolylmethanemethyl)cysteine.

Belongs to the HMBS family. Monomer. Dipyrromethane serves as cofactor.

The enzyme catalyses 4 porphobilinogen + H2O = hydroxymethylbilane + 4 NH4(+). It functions in the pathway porphyrin-containing compound metabolism; protoporphyrin-IX biosynthesis; coproporphyrinogen-III from 5-aminolevulinate: step 2/4. Its pathway is porphyrin-containing compound metabolism; chlorophyll biosynthesis. Its function is as follows. Tetrapolymerization of the monopyrrole PBG into the hydroxymethylbilane pre-uroporphyrinogen in several discrete steps. The chain is Porphobilinogen deaminase from Synechococcus elongatus (strain ATCC 33912 / PCC 7942 / FACHB-805) (Anacystis nidulans R2).